A 468-amino-acid chain; its full sequence is Cysteine--tRNA ligase (468 aa).

Zn(2+) is bound at residue C28. The 'HIGH' region signature appears at P30–N40. Residues C212, H237, and E241 each coordinate Zn(2+). The short motif at K271–S275 is the 'KMSKS' region element. Residue K274 coordinates ATP.

The protein belongs to the class-I aminoacyl-tRNA synthetase family. Monomer. Zn(2+) serves as cofactor.

It localises to the cytoplasm. It catalyses the reaction tRNA(Cys) + L-cysteine + ATP = L-cysteinyl-tRNA(Cys) + AMP + diphosphate. This Latilactobacillus sakei subsp. sakei (strain 23K) (Lactobacillus sakei subsp. sakei) protein is Cysteine--tRNA ligase.